A 1029-amino-acid polypeptide reads, in one-letter code: Putative B3 domain-containing protein Os03g0621600 (1029 aa).

DNA-binding regions (TF-B3) lie at residues 147–240 (DTYF…FDPS), 339–430 (VAVM…RKMK), and 450–543 (EKYF…FDPS). A disordered region spans residues 572–605 (TSYHDQPKGNKHWMQKDSSSKGNKIGNTRSSNTP). Residues 591–605 (SKGNKIGNTRSSNTP) show a composition bias toward polar residues. The segment at residues 731 to 824 (YKNFFKVMIG…KLKVLIFGPS (94 aa)) is a DNA-binding region (TF-B3 4). Polar residues predominate over residues 852-867 (SSNSHDLPVKSPQNVS). The tract at residues 852 to 882 (SSNSHDLPVKSPQNVSKSEKQWDSSEQENDT) is disordered. A DNA-binding region (TF-B3 5) is located at residues 934-1029 (GCILRKSRVH…SMNVHIIPKK (96 aa)).

It is found in the nucleus. This is Putative B3 domain-containing protein Os03g0621600 from Oryza sativa subsp. japonica (Rice).